The primary structure comprises 408 residues: Repulsive guidance molecule B homolog drag-1 (408 aa).

An N-terminal signal peptide occupies residues 1–22; that stretch reads MSIVYLVSITFIFSVFKPITSC. Topologically, residues 23–387 are extracellular; the sequence is RVEECAAWFQ…SEIFKKCIPS (365 aa). 4 N-linked (GlcNAc...) asparagine glycosylation sites follow: asparagine 60, asparagine 134, asparagine 183, and asparagine 376. A helical membrane pass occupies residues 388–408; it reads KSIRFYPFLAIFFFALLSLLC.

It belongs to the repulsive guidance molecule (RGM) family. As to quaternary structure, interacts with unc-40 (via FN6 domain), dbl-1 and sma-6. Expressed in pharyngeal, hypodermal and intestinal cells.

The protein resides in the cell membrane. Functionally, probably in association with the cell surface receptor unc-40, positively modulates the BMP-like Sma/Mab signaling pathway through interaction with both the ligand dbl-1 and its type I receptor sma-6. Regulates body size and this may be through modulation of the Sma/Mab signaling pathway. This chain is Repulsive guidance molecule B homolog drag-1, found in Caenorhabditis elegans.